A 591-amino-acid polypeptide reads, in one-letter code: Protein NRT1/ PTR FAMILY 4.3 (591 aa).

Polar residues predominate over residues 1–10 (MAEINKQSNK). The segment at 1–38 (MAEINKQSNKWEQEEVSNENNWELAEEESVDWRGRPSN) is disordered. The next 12 helical transmembrane spans lie at 47-67 (AALF…AVGN), 85-105 (ANIV…GGYL), 109-129 (FLGS…GFIL), 157-177 (GFKA…SGCV), 204-224 (FNAA…LLVW), 233-253 (IGFG…VSGT), 347-367 (LISL…LAQL), 395-415 (AIPY…LVPF), 429-449 (LTRI…AAML), 463-483 (ILSI…EMFT), 502-522 (FLMA…SVLV), and 551-571 (LFYW…LFWS).

Belongs to the major facilitator superfamily. Proton-dependent oligopeptide transporter (POT/PTR) (TC 2.A.17) family. In terms of tissue distribution, expressed in flowers. Detected in roots and siliques.

It localises to the membrane. This chain is Protein NRT1/ PTR FAMILY 4.3 (NPF4.3), found in Arabidopsis thaliana (Mouse-ear cress).